Reading from the N-terminus, the 696-residue chain is DNA topoisomerase 6 subunit B (696 aa).

Residues 1-36 (MDDDAGDGAASGGTKRKVTAASSSAAAKGKAAGKGK) are disordered. Positions 20–36 (AASSSAAAKGKAAGKGK) are enriched in low complexity. ATP is bound by residues asparagine 88, aspartate 187, 208 to 209 (TK), 217 to 224 (GKFGLGAK), and lysine 543.

Belongs to the TOP6B family. In terms of assembly, homodimer. Heterotetramer of two TOP6A and two TOP6B subunits. Interacts with SPO11-2 and TOP6A3. In terms of tissue distribution, highly expressed in flowers before pollination. Expressed in roots and shoots.

The protein resides in the nucleus. It carries out the reaction ATP-dependent breakage, passage and rejoining of double-stranded DNA.. Component of the DNA topoisomerase VI involved in chromatin organization and progression of endoreduplication cycles. Relaxes both positive and negative superturns and exhibits a strong decatenase activity. The B subunit binds ATP. May be involved in cell proliferation and stress tolerance. This Oryza sativa subsp. indica (Rice) protein is DNA topoisomerase 6 subunit B.